The chain runs to 1005 residues: Helicase-like transcription factor (1005 aa).

Position 27 is an omega-N-methylarginine (Arg-27). The DNA-binding element occupies 38–287 (EFQDIIPPDD…FSEKDQPENV (250 aa)). Residue Lys-112 forms a Glycyl lysine isopeptide (Lys-Gly) (interchain with G-Cter in SUMO2) linkage. Tyr-195 bears the Phosphotyrosine; by JAK2 mark. A Glycyl lysine isopeptide (Lys-Gly) (interchain with G-Cter in SUMO2) cross-link involves residue Lys-211. 294–301 (DDMGLGKT) is an ATP binding site. Residues 325-361 (KNQVKKECNSSESDKPGRKDTIKKTDGLSKEGSRYSE) show a composition bias toward basic and acidic residues. Residues 325 to 385 (KNQVKKECNS…SELSSSQPKR (61 aa)) are disordered. Positions 373–382 (YSMSELSSSQ) are enriched in polar residues. 3 positions are modified to phosphoserine: Ser-395, Ser-396, and Ser-398. In terms of domain architecture, Helicase ATP-binding spans 427 to 603 (GPSKIKEDTA…WSLLSFLKLK (177 aa)). Positions 554–557 (DEGH) match the DEGH box motif. Thr-733 is modified (phosphothreonine). Residues 757–798 (CAICLDSLTVPVITHCAHVFCKPCICQCIQNEQPHAKCPLCR) form an RING-type zinc finger. Required for interaction with the RFBP isoform of ATP11B stretches follow at residues 767–772 (PVITHC) and 791–796 (HAKCPL). Residues 834 to 999 (ALMHALIDLR…EMKQAKINEI (166 aa)) form the Helicase C-terminal domain. The segment at 922 to 1005 (SRVFLMDPAW…INEIRTLIDL (84 aa)) is interaction with SP1 and SP3.

This sequence belongs to the SNF2/RAD54 helicase family. RAD16 subfamily. As to quaternary structure, interacts with SP1 and SP3 independently of DNA; the interaction with these transcriptional factors may be required for basal transcription of target genes. Interacts (via the RING-finger) with isoform RFBP of ATP11B. Progesterone-dependent isoform 1 interacts with EGR1; the interaction requires prior binding to DNA and represses c-Rel via a DNA looping mechanism. Interacts with GATA4. Interacts with PCNA; the interaction promotes polyubiquitination of PCNA through association with the UBE2B-RAD18 and UBE2V2-UBE2N ubiquitin ligase complexes. Interacts with RAD18, SHPRH, UBE2V2 and UBE2N. Post-translationally, phosphorylated on serine, threonine, and tyrosine residues. Tyr-195 phosphorylation is catalyzed by JAK2 in response to prolactin treatment. It is required for DNA binding. Isoform 1 is expressed preferentially in bladder, cervix, diaphragm, duodenum, epididymis, heart, kidney, liver, lung, ovary (granulosa cells), prostate, spleen, testis (predominantly in the Sertoli cells of the seminiferous tubules) and vagina. Isoform 2 is expressed preferentially in lactating mammary gland and uterine endometrium.

It is found in the cytoplasm. The protein localises to the nucleus. Its subcellular location is the nucleolus. It localises to the nucleoplasm. It carries out the reaction S-ubiquitinyl-[E2 ubiquitin-conjugating enzyme]-L-cysteine + [acceptor protein]-L-lysine = [E2 ubiquitin-conjugating enzyme]-L-cysteine + N(6)-ubiquitinyl-[acceptor protein]-L-lysine.. Its pathway is protein modification; protein ubiquitination. Functionally, has both helicase and E3 ubiquitin ligase activities. Possesses intrinsic ATP-dependent nucleosome-remodeling activity. This activity may be required for transcriptional activation or repression of specific target promoters. These may include the SERPINE1, to which this protein can bind directly. Mediates repression by c-Rel through a DNA-looping mechanism. Plays a role in error-free postreplication repair (PRR) of damaged DNA and maintains genomic stability through acting as a ubiquitin ligase for 'Lys-63'-linked polyubiquitination of chromatin-bound PCNA. Transcriptional regulator that mediates the ability of prolactin to augment progesterone-dependent transcription of the SCGB1A1/uteroglobin gene through a bipartite progesterone receptor half-site/overlapping Y-box combination (-38/-26) where progesterone activation is attenuated by nuclear factor Y binding. Regulation also involves two GC-rich sequences in the proximal promoter (positions -162/+90) and a RUSH/SMARCA3 site (positions -616/-611) in the 5'-untranslated region. The polypeptide is Helicase-like transcription factor (HLTF) (Oryctolagus cuniculus (Rabbit)).